A 259-amino-acid polypeptide reads, in one-letter code: Ribonuclease PH (259 aa).

Residues Arg88 and 126–128 contribute to the phosphate site; that span reads GTR.

Belongs to the RNase PH family. In terms of assembly, homohexameric ring arranged as a trimer of dimers.

The catalysed reaction is tRNA(n+1) + phosphate = tRNA(n) + a ribonucleoside 5'-diphosphate. In terms of biological role, phosphorolytic 3'-5' exoribonuclease that plays an important role in tRNA 3'-end maturation. Removes nucleotide residues following the 3'-CCA terminus of tRNAs; can also add nucleotides to the ends of RNA molecules by using nucleoside diphosphates as substrates, but this may not be physiologically important. Probably plays a role in initiation of 16S rRNA degradation (leading to ribosome degradation) during starvation. The chain is Ribonuclease PH from Mycobacterium leprae (strain Br4923).